The following is a 616-amino-acid chain: MPFTLHLRSRLPSAIRSLILQKKPNIRNTSSMAGELRPASLVVLPRSLAPAFERFCQVNTGPLPLLGQSEPEKWMLPPQGAISETRMGHPQFWKYEFGACTGSLASLEQYSEQLKDMVAFFLGCSFSLEEALEKAGLPRRDPAGHSQTTVPCVTHAGFCCPLVVTMRPIPKDKLEGLVRACCSLGGEQGQPVHMGDPELLGIKELSKPAYGDAMVCPPGEVPVFWPSPLTSLGAVSSCETPLAFASIPGCTVMTDLKDAKAPPGCLTPERIPEVHHISQDPLHYSIASVSASQKIRELESMIGIDPGNRGIGHLLCKDELLKASLSLSHARSVLITTGFPTHFNHEPPEETDGPPGAVALVAFLQALEKEVAIIVDQRAWNLHQKIVEDAVEQGVLKTQIPILTYQGGSVEAAQAFLCKNGDPQTPRFDHLVAIERAGRAADGNYYNARKMNIKHLVDPIDDLFLAAKKIPGISSTGVGDGGNELGMGKVKEAVRRHIRHGDVIACDVEADFAVIAGVSNWGGYALACALYILYSCAVHSQYLRKAVGPSRAPGDQAWTQALPSVIKEEKMLGILVQHKVRSGVSGIVGMEVDGLPFHNTHAEMIQKLVDVTTAQV.

Residues 1–28 (MPFTLHLRSRLPSAIRSLILQKKPNIRN) constitute a mitochondrion transit peptide.

This sequence belongs to the D-glutamate cyclase family.

The protein resides in the mitochondrion matrix. The catalysed reaction is D-glutamate = 5-oxo-D-proline + H2O. In terms of biological role, D-glutamate cyclase that converts D-glutamate to 5-oxo-D-proline. This Homo sapiens (Human) protein is D-glutamate cyclase, mitochondrial.